Reading from the N-terminus, the 74-residue chain is UPF0435 protein BAA_0470 (74 aa).

Belongs to the UPF0435 family.

In Bacillus anthracis (strain A0248), this protein is UPF0435 protein BAA_0470.